We begin with the raw amino-acid sequence, 270 residues long: MDTYTSAKINWFPGHMKKIHDQLKKLSSQIDGIIEIVDARAPTLTHNSEIISYFLNKPKLILALKTDLAQYKPNKKILFGSLKEPFKLKKKVLKTLTTLFANKRQQLKAKGLLIKQFRLAVIGMPNVGKSSLINLLINKNHLKVANRAGITKSLNWIQISPELLLSDTPGVFLKRIDEIQIGYKLVLTNVIRREVVNIEEVGMFAFNYLKKHYKQLLPFEADSFINFLEKFAKVRGLIKKANELNTNLACEIFINELINGKYGKLSYELN.

The CP-type G domain maps to 20-174 (HDQLKKLSSQ…LSDTPGVFLK (155 aa)). Residues 126 to 131 (NVGKSS) and Gly170 each bind GTP.

The protein belongs to the TRAFAC class YlqF/YawG GTPase family. MTG1 subfamily.

The protein localises to the cytoplasm. Functionally, required for a late step of 50S ribosomal subunit assembly. Has GTPase activity. Binds to the 23S rRNA. This chain is Probable ribosome biogenesis GTPase A (rbgA), found in Mycoplasma genitalium (strain ATCC 33530 / DSM 19775 / NCTC 10195 / G37) (Mycoplasmoides genitalium).